The chain runs to 230 residues: Flagellar L-ring protein (230 aa).

Positions 1 to 15 (MSRLPSLSRPCLAIA) are cleaved as a signal peptide. The N-palmitoyl cysteine moiety is linked to residue C16. C16 is lipidated: S-diacylglycerol cysteine.

It belongs to the FlgH family. The basal body constitutes a major portion of the flagellar organelle and consists of four rings (L,P,S, and M) mounted on a central rod.

The protein localises to the cell outer membrane. Its subcellular location is the bacterial flagellum basal body. In terms of biological role, assembles around the rod to form the L-ring and probably protects the motor/basal body from shearing forces during rotation. The polypeptide is Flagellar L-ring protein (Xanthomonas axonopodis pv. citri (strain 306)).